Reading from the N-terminus, the 210-residue chain is Na(+)-translocating NADH-quinone reductase subunit D (210 aa).

The next 5 membrane-spanning stretches (helical) occupy residues 42 to 62, 72 to 92, 103 to 123, 131 to 151, and 178 to 198; these read FVMT…ISLI, IIAQ…VLKA, VFVG…AYAM, FLDG…VATV, and NGLL…IWGV.

Belongs to the NqrDE/RnfAE family. Composed of six subunits; NqrA, NqrB, NqrC, NqrD, NqrE and NqrF.

The protein resides in the cell inner membrane. It catalyses the reaction a ubiquinone + n Na(+)(in) + NADH + H(+) = a ubiquinol + n Na(+)(out) + NAD(+). Functionally, NQR complex catalyzes the reduction of ubiquinone-1 to ubiquinol by two successive reactions, coupled with the transport of Na(+) ions from the cytoplasm to the periplasm. NqrA to NqrE are probably involved in the second step, the conversion of ubisemiquinone to ubiquinol. In Aeromonas hydrophila subsp. hydrophila (strain ATCC 7966 / DSM 30187 / BCRC 13018 / CCUG 14551 / JCM 1027 / KCTC 2358 / NCIMB 9240 / NCTC 8049), this protein is Na(+)-translocating NADH-quinone reductase subunit D.